The primary structure comprises 405 residues: Riboflavin biosynthesis protein RibBA (405 aa).

The segment at 1 to 205 (MSEIQLNTIE…IKDLIAYRLR (205 aa)) is DHBP synthase. D-ribulose 5-phosphate contacts are provided by residues 30–31 (RE), Asp35, 144–148 (RAGHT), and Glu168. Glu31 is a Mg(2+) binding site. His147 is a binding site for Mg(2+). The GTP cyclohydrolase II stretch occupies residues 206–405 (TESIVENGVE…RMGHVLHNIK (200 aa)). 256–260 (RVHSS) contributes to the GTP binding site. Residues Cys261, Cys272, and Cys274 each contribute to the Zn(2+) site. GTP-binding positions include Gln277, 299 to 301 (EGR), and Thr321. Asp333 acts as the Proton acceptor; for GTP cyclohydrolase activity in catalysis. Arg335 functions as the Nucleophile; for GTP cyclohydrolase activity in the catalytic mechanism. GTP is bound by residues Ser356 and Lys361.

This sequence in the N-terminal section; belongs to the DHBP synthase family. In the C-terminal section; belongs to the GTP cyclohydrolase II family. Mg(2+) serves as cofactor. Requires Mn(2+) as cofactor. The cofactor is Zn(2+).

The enzyme catalyses D-ribulose 5-phosphate = (2S)-2-hydroxy-3-oxobutyl phosphate + formate + H(+). The catalysed reaction is GTP + 4 H2O = 2,5-diamino-6-hydroxy-4-(5-phosphoribosylamino)-pyrimidine + formate + 2 phosphate + 3 H(+). It functions in the pathway cofactor biosynthesis; riboflavin biosynthesis; 2-hydroxy-3-oxobutyl phosphate from D-ribulose 5-phosphate: step 1/1. The protein operates within cofactor biosynthesis; riboflavin biosynthesis; 5-amino-6-(D-ribitylamino)uracil from GTP: step 1/4. In terms of biological role, catalyzes the conversion of D-ribulose 5-phosphate to formate and 3,4-dihydroxy-2-butanone 4-phosphate. Functionally, catalyzes the conversion of GTP to 2,5-diamino-6-ribosylamino-4(3H)-pyrimidinone 5'-phosphate (DARP), formate and pyrophosphate. The chain is Riboflavin biosynthesis protein RibBA from Parabacteroides distasonis (strain ATCC 8503 / DSM 20701 / CIP 104284 / JCM 5825 / NCTC 11152).